A 318-amino-acid polypeptide reads, in one-letter code: DNA polymerase IV (318 aa).

The UmuC domain occupies 6–186 (IIHIDMDAFY…LPLGKIPGVG (181 aa)). Residues aspartate 10 and aspartate 104 each coordinate Mg(2+). The active site involves glutamate 105.

It belongs to the DNA polymerase type-Y family. As to quaternary structure, monomer. The cofactor is Mg(2+).

It localises to the cytoplasm. The catalysed reaction is DNA(n) + a 2'-deoxyribonucleoside 5'-triphosphate = DNA(n+1) + diphosphate. Functionally, poorly processive, error-prone DNA polymerase involved in untargeted mutagenesis. Copies undamaged DNA at stalled replication forks, which arise in vivo from mismatched or misaligned primer ends. These misaligned primers can be extended by PolIV. Exhibits no 3'-5' exonuclease (proofreading) activity. May be involved in translesional synthesis, in conjunction with the beta clamp from PolIII. This chain is DNA polymerase IV, found in Neisseria meningitidis serogroup B (strain ATCC BAA-335 / MC58).